Consider the following 28-residue polypeptide: Alpha-(1-6)-linked fucose-specific lectin (28 aa).

As to quaternary structure, homohexamer. Expressed by mycelium-forming spores.

Its subcellular location is the secreted. In terms of biological role, alpha-(1-6)-linked L-fucose specific lectin. The chain is Alpha-(1-6)-linked fucose-specific lectin from Rhizopus stolonifer (Rhizopus nigricans).